A 165-amino-acid polypeptide reads, in one-letter code: Protein OPG091 (165 aa).

This sequence belongs to the orthopoxvirus OPG091 family.

It localises to the virion. It is found in the host cytoplasm. Its function is as follows. Contributes to vaccinia virus virulence in mice but not to replication in cell culture. This chain is Protein OPG091 (OPG091), found in Homo sapiens (Human).